Here is a 182-residue protein sequence, read N- to C-terminus: Adenine phosphoribosyltransferase (182 aa).

It belongs to the purine/pyrimidine phosphoribosyltransferase family. As to quaternary structure, homodimer.

It is found in the cytoplasm. The catalysed reaction is AMP + diphosphate = 5-phospho-alpha-D-ribose 1-diphosphate + adenine. It participates in purine metabolism; AMP biosynthesis via salvage pathway; AMP from adenine: step 1/1. In terms of biological role, catalyzes a salvage reaction resulting in the formation of AMP, that is energically less costly than de novo synthesis. The chain is Adenine phosphoribosyltransferase from Campylobacter jejuni subsp. jejuni serotype O:2 (strain ATCC 700819 / NCTC 11168).